The sequence spans 426 residues: Serine--tRNA ligase (426 aa).

231–233 (TAE) serves as a coordination point for L-serine. 262 to 264 (RSE) contributes to the ATP binding site. E285 provides a ligand contact to L-serine. An ATP-binding site is contributed by 349–352 (EISS). S385 contacts L-serine.

This sequence belongs to the class-II aminoacyl-tRNA synthetase family. Type-1 seryl-tRNA synthetase subfamily. In terms of assembly, homodimer. The tRNA molecule binds across the dimer.

Its subcellular location is the cytoplasm. It catalyses the reaction tRNA(Ser) + L-serine + ATP = L-seryl-tRNA(Ser) + AMP + diphosphate + H(+). The catalysed reaction is tRNA(Sec) + L-serine + ATP = L-seryl-tRNA(Sec) + AMP + diphosphate + H(+). The protein operates within aminoacyl-tRNA biosynthesis; selenocysteinyl-tRNA(Sec) biosynthesis; L-seryl-tRNA(Sec) from L-serine and tRNA(Sec): step 1/1. In terms of biological role, catalyzes the attachment of serine to tRNA(Ser). Is also able to aminoacylate tRNA(Sec) with serine, to form the misacylated tRNA L-seryl-tRNA(Sec), which will be further converted into selenocysteinyl-tRNA(Sec). This is Serine--tRNA ligase from Lysinibacillus sphaericus (strain C3-41).